A 207-amino-acid polypeptide reads, in one-letter code: Thiamine-phosphate synthase (207 aa).

Residues 36 to 40 (QLRIK) and D68 contribute to the 4-amino-2-methyl-5-(diphosphooxymethyl)pyrimidine site. Positions 69 and 88 each coordinate Mg(2+). Residue S106 coordinates 4-amino-2-methyl-5-(diphosphooxymethyl)pyrimidine. A 2-[(2R,5Z)-2-carboxy-4-methylthiazol-5(2H)-ylidene]ethyl phosphate-binding site is contributed by 132–134 (TQT). K135 lines the 4-amino-2-methyl-5-(diphosphooxymethyl)pyrimidine pocket. Residues G162 and 182-183 (VS) contribute to the 2-[(2R,5Z)-2-carboxy-4-methylthiazol-5(2H)-ylidene]ethyl phosphate site.

It belongs to the thiamine-phosphate synthase family. Requires Mg(2+) as cofactor.

It catalyses the reaction 2-[(2R,5Z)-2-carboxy-4-methylthiazol-5(2H)-ylidene]ethyl phosphate + 4-amino-2-methyl-5-(diphosphooxymethyl)pyrimidine + 2 H(+) = thiamine phosphate + CO2 + diphosphate. The catalysed reaction is 2-(2-carboxy-4-methylthiazol-5-yl)ethyl phosphate + 4-amino-2-methyl-5-(diphosphooxymethyl)pyrimidine + 2 H(+) = thiamine phosphate + CO2 + diphosphate. It carries out the reaction 4-methyl-5-(2-phosphooxyethyl)-thiazole + 4-amino-2-methyl-5-(diphosphooxymethyl)pyrimidine + H(+) = thiamine phosphate + diphosphate. It participates in cofactor biosynthesis; thiamine diphosphate biosynthesis; thiamine phosphate from 4-amino-2-methyl-5-diphosphomethylpyrimidine and 4-methyl-5-(2-phosphoethyl)-thiazole: step 1/1. Functionally, condenses 4-methyl-5-(beta-hydroxyethyl)thiazole monophosphate (THZ-P) and 2-methyl-4-amino-5-hydroxymethyl pyrimidine pyrophosphate (HMP-PP) to form thiamine monophosphate (TMP). This is Thiamine-phosphate synthase from Pyrococcus horikoshii (strain ATCC 700860 / DSM 12428 / JCM 9974 / NBRC 100139 / OT-3).